The primary structure comprises 280 residues: MNKNHPELLQNVTDVTAARSLPLWKRENLTTTEPDWLAEEVPVALVYNGISHVVMMASPKDLEIFALGFSLSEGIVESSHEIYGMDIIHGCNGIEIQVELSSRRFTELKARRRNLAGRTGCGVCGVEQLNDIVRPLAPLPFTQTFSLDNLDGALRQLASVQPVGELTGCTHAAAWLTPQGDIAGGHEDVGRHVALDKLLGRRAREAWQQGAVLVSSRASYEMVQKAATCGVEILFAVSAATTLAVEVAERCNLTLVGFSRPGRATIYTHPQRLIAGDKNA.

C121 (cysteine persulfide intermediate) is an active-site residue. 258-263 (FSRPGR) is a Mo-bis(molybdopterin guanine dinucleotide) binding site.

Belongs to the FdhD family.

Its subcellular location is the cytoplasm. Functionally, required for formate dehydrogenase (FDH) activity. Acts as a sulfur carrier protein that transfers sulfur from IscS to the molybdenum cofactor prior to its insertion into FDH. The polypeptide is Sulfur carrier protein FdhD (Cronobacter sakazakii (strain ATCC BAA-894) (Enterobacter sakazakii)).